The sequence spans 156 residues: Ribosomal RNA large subunit methyltransferase H (156 aa).

S-adenosyl-L-methionine contacts are provided by residues leucine 73, glycine 104, and 123 to 128 (ISSMTL).

Belongs to the RNA methyltransferase RlmH family. In terms of assembly, homodimer.

The protein resides in the cytoplasm. The catalysed reaction is pseudouridine(1915) in 23S rRNA + S-adenosyl-L-methionine = N(3)-methylpseudouridine(1915) in 23S rRNA + S-adenosyl-L-homocysteine + H(+). Specifically methylates the pseudouridine at position 1915 (m3Psi1915) in 23S rRNA. The sequence is that of Ribosomal RNA large subunit methyltransferase H from Burkholderia cenocepacia (strain ATCC BAA-245 / DSM 16553 / LMG 16656 / NCTC 13227 / J2315 / CF5610) (Burkholderia cepacia (strain J2315)).